Reading from the N-terminus, the 245-residue chain is Ribonuclease PH (245 aa).

Residues arginine 87 and 125–127 (GTR) contribute to the phosphate site.

It belongs to the RNase PH family. Homohexameric ring arranged as a trimer of dimers.

It carries out the reaction tRNA(n+1) + phosphate = tRNA(n) + a ribonucleoside 5'-diphosphate. In terms of biological role, phosphorolytic 3'-5' exoribonuclease that plays an important role in tRNA 3'-end maturation. Removes nucleotide residues following the 3'-CCA terminus of tRNAs; can also add nucleotides to the ends of RNA molecules by using nucleoside diphosphates as substrates, but this may not be physiologically important. Probably plays a role in initiation of 16S rRNA degradation (leading to ribosome degradation) during starvation. The chain is Ribonuclease PH from Streptomyces coelicolor (strain ATCC BAA-471 / A3(2) / M145).